Consider the following 235-residue polypeptide: Glucosamine-6-phosphate deaminase (235 aa).

The active-site Proton acceptor; for enolization step is the Asp-62. The active-site For ring-opening step is the Asn-128. The active-site Proton acceptor; for ring-opening step is His-130. Residue Glu-135 is the For ring-opening step of the active site.

This sequence belongs to the glucosamine/galactosamine-6-phosphate isomerase family. NagB subfamily.

The catalysed reaction is alpha-D-glucosamine 6-phosphate + H2O = beta-D-fructose 6-phosphate + NH4(+). The protein operates within amino-sugar metabolism; N-acetylneuraminate degradation; D-fructose 6-phosphate from N-acetylneuraminate: step 5/5. Functionally, catalyzes the reversible isomerization-deamination of glucosamine 6-phosphate (GlcN6P) to form fructose 6-phosphate (Fru6P) and ammonium ion. This chain is Glucosamine-6-phosphate deaminase, found in Lactococcus lactis subsp. cremoris (strain SK11).